Reading from the N-terminus, the 278-residue chain is tRNA pseudouridine synthase A (278 aa).

Asp-61 (nucleophile) is an active-site residue. Substrate is bound at residue Tyr-119.

Belongs to the tRNA pseudouridine synthase TruA family. As to quaternary structure, homodimer.

The catalysed reaction is uridine(38/39/40) in tRNA = pseudouridine(38/39/40) in tRNA. In terms of biological role, formation of pseudouridine at positions 38, 39 and 40 in the anticodon stem and loop of transfer RNAs. The protein is tRNA pseudouridine synthase A of Oleidesulfovibrio alaskensis (strain ATCC BAA-1058 / DSM 17464 / G20) (Desulfovibrio alaskensis).